A 191-amino-acid polypeptide reads, in one-letter code: Elongation factor P-like protein (191 aa).

It belongs to the elongation factor P family.

The sequence is that of Elongation factor P-like protein from Shewanella sediminis (strain HAW-EB3).